The primary structure comprises 358 residues: DNA polymerase IV (358 aa).

Residues 4–185 (IIHVDMDCFY…LPLIKIPGVG (182 aa)) form the UmuC domain. Aspartate 8 and aspartate 103 together coordinate Mg(2+). The active site involves glutamate 104.

Belongs to the DNA polymerase type-Y family. As to quaternary structure, monomer. Requires Mg(2+) as cofactor.

Its subcellular location is the cytoplasm. It carries out the reaction DNA(n) + a 2'-deoxyribonucleoside 5'-triphosphate = DNA(n+1) + diphosphate. Its function is as follows. Poorly processive, error-prone DNA polymerase involved in untargeted mutagenesis. Copies undamaged DNA at stalled replication forks, which arise in vivo from mismatched or misaligned primer ends. These misaligned primers can be extended by PolIV. Exhibits no 3'-5' exonuclease (proofreading) activity. May be involved in translesional synthesis, in conjunction with the beta clamp from PolIII. This is DNA polymerase IV from Shewanella pealeana (strain ATCC 700345 / ANG-SQ1).